Consider the following 276-residue polypeptide: Small ribosomal subunit protein uS3 (276 aa).

A KH type-2 domain is found at 39 to 110; it reads IRRETMKFLK…KINIKIKEIK (72 aa).

It belongs to the universal ribosomal protein uS3 family. As to quaternary structure, part of the 30S ribosomal subunit. Forms a tight complex with proteins S10 and S14.

Binds the lower part of the 30S subunit head. Binds mRNA in the 70S ribosome, positioning it for translation. The polypeptide is Small ribosomal subunit protein uS3 (Borrelia recurrentis (strain A1)).